Consider the following 315-residue polypeptide: Olfactory receptor 5A1 (315 aa).

Over 1–28 (MSITKAWNSSSVTMFILLGFTDHPELQA) the chain is Extracellular. An N-linked (GlcNAc...) asparagine glycan is attached at Asn-8. Residues 29 to 52 (LLFVTFLGIYLTTLAWNLALIFLI) form a helical membrane-spanning segment. At 53-60 (RGDTHLHT) the chain is on the cytoplasmic side. A helical transmembrane segment spans residues 61–82 (PMYFFLSNLSFIDICYSSAVAP). The Extracellular portion of the chain corresponds to 83–103 (NMLTDFFWEQKTISFVGCAAQ). An intrachain disulfide couples Cys-100 to Cys-192. The chain crosses the membrane as a helical span at residues 104 to 123 (FFFFVGMGLSECLLLTAMAY). At 124–142 (DRYAAISSPLLYPTIMTQG) the chain is on the cytoplasmic side. Residues 143-161 (LCTRMVVGAYVGGFLSSLI) form a helical membrane-spanning segment. At 162–198 (QASSIFRLHFCGPNIINHFFCDLPPVLALSCSDTFLS) the chain is on the extracellular side. Residues 199–222 (QVVNFLVVVTVGGTSFLQLLISYG) form a helical membrane-spanning segment. Residues 223 to 239 (YIVSAVLKIPSAEGRWK) are Cytoplasmic-facing. A helical membrane pass occupies residues 240–262 (ACNTCASHLMVVTLLFGTALFVY). Topologically, residues 263–275 (LRPSSSYLLGRDK) are extracellular. Residues 276–295 (VVSVFYSLVIPMLNPLIYSL) traverse the membrane as a helical segment. Topologically, residues 296–315 (RNKEIKDALWKVLERKKVFS) are cytoplasmic.

It belongs to the G-protein coupled receptor 1 family.

Its subcellular location is the cell membrane. Odorant receptor. This chain is Olfactory receptor 5A1 (OR5A1), found in Homo sapiens (Human).